Consider the following 429-residue polypeptide: Antho-RFamide neuropeptides type 2 (429 aa).

The signal sequence occupies residues 1 to 22; the sequence is MTTVSYVTILLTVLVQVLTSDA. Residues 23-233 constitute a propeptide that is removed on maturation; it reads KATNNKRELS…EFQGRFGRED (211 aa). Over residues 230–371 the composition is skewed to basic and acidic residues; the sequence is GREDQGRFGR…EDIAKEDQGR (142 aa). Positions 230–429 are disordered; sequence GREDQGRFGR…KSDDALAKIS (200 aa). Residue Gln-234 is modified to Pyrrolidone carboxylic acid. Phe-237 carries the phenylalanine amide modification. A propeptide spanning residues 239 to 241 is cleaved from the precursor; the sequence is RED. A Pyrrolidone carboxylic acid modification is found at Gln-242. Phenylalanine amide is present on Phe-245. Residues 247–249 constitute a propeptide that is removed on maturation; the sequence is RED. Gln-250 is modified (pyrrolidone carboxylic acid). The residue at position 253 (Phe-253) is a Phenylalanine amide. Residues 255–257 constitute a propeptide that is removed on maturation; sequence RED. Gln-258 is subject to Pyrrolidone carboxylic acid. Phe-261 bears the Phenylalanine amide mark. Positions 263–265 are excised as a propeptide; the sequence is RED. At Gln-266 the chain carries Pyrrolidone carboxylic acid. Phe-269 bears the Phenylalanine amide mark. The propeptide occupies 271-273; that stretch reads RED. Residue Gln-274 is modified to Pyrrolidone carboxylic acid. Position 277 is a phenylalanine amide (Phe-277). Residues 279–289 constitute a propeptide that is removed on maturation; sequence RELQGRFGRED. Position 290 is a pyrrolidone carboxylic acid (Gln-290). Residue Phe-293 is modified to Phenylalanine amide. Positions 295-297 are excised as a propeptide; it reads RED. Gln-298 is subject to Pyrrolidone carboxylic acid. Phe-301 is subject to Phenylalanine amide. A propeptide spanning residues 303–305 is cleaved from the precursor; that stretch reads RED. At Gln-306 the chain carries Pyrrolidone carboxylic acid. Phe-309 carries the phenylalanine amide modification. Residues 311–321 constitute a propeptide that is removed on maturation; the sequence is RELQGRFGRED. At Gln-322 the chain carries Pyrrolidone carboxylic acid. Phenylalanine amide is present on Phe-325. A propeptide spanning residues 327–329 is cleaved from the precursor; sequence RED. Pyrrolidone carboxylic acid is present on Gln-330. Phenylalanine amide is present on Phe-333. Residues 335–342 constitute a propeptide that is removed on maturation; it reads REDLAKED. Gln-343 bears the Pyrrolidone carboxylic acid mark. Phe-346 carries the post-translational modification Phenylalanine amide. The propeptide occupies 348 to 355; that stretch reads REDLAKED. Gln-356 is modified (pyrrolidone carboxylic acid). Residue Phe-359 is modified to Phenylalanine amide. Positions 361–368 are excised as a propeptide; it reads REDIAKED. Gln-369 is subject to Pyrrolidone carboxylic acid. Phe-372 bears the Phenylalanine amide mark. A propeptide spanning residues 374-429 is cleaved from the precursor; sequence RNAAAAAKKRTIDVIDIESDPKPQTRFRDGKDMQEKRKVEKKDKIEKSDDALAKIS. The segment covering 392-429 has biased composition (basic and acidic residues); it reads SDPKPQTRFRDGKDMQEKRKVEKKDKIEKSDDALAKIS.

The protein belongs to the FARP (FMRFamide related peptide) family.

It is found in the secreted. Its function is as follows. Not known but it could act as a transmitter at neuromuscular synapses. The sequence is that of Antho-RFamide neuropeptides type 2 from Anthopleura elegantissima (Green aggregating anemone).